The sequence spans 358 residues: MLYHLLYPLASDYKLFNVFKYLTFRSIYAMITALLLAFIVGPWVVRKLEALQARQVIRTDGPESHLKKQGTPTMGGVLILVCIVLPTLLWADLKNVFIWLTLLIIVGYGVLGFVDDYKKVVEKNPKGLSPRQKMFWQMLLAAGVGIFLFYLPGFSTELYLPFFKRVHPELGILFIPFVMLVIVGASNAVNLTDGLDGLAIGPVAINAATYLLFCYIAGNAKLSGYLQIPYVPGAGELAVLCGAMVGAGLGFLWYNSYPAEVFMGDVGSLSLGGALGTLAVLTKQEILLVIVGGVFVVEALSVIFQVGSYKYRGKRIFRMAPIHHHFELKGVAEPKIIVRFWIITIILALVAISTLKMR.

The next 10 helical transmembrane spans lie at 24 to 44 (FRSIYAMITALLLAFIVGPWV), 73 to 93 (TMGGVLILVCIVLPTLLWADL), 95 to 115 (NVFIWLTLLIIVGYGVLGFVD), 134 to 154 (MFWQMLLAAGVGIFLFYLPGF), 169 to 189 (ELGILFIPFVMLVIVGASNAV), 197 to 217 (GLAIGPVAINAATYLLFCYIA), 233 to 253 (GAGELAVLCGAMVGAGLGFLW), 261 to 281 (VFMGDVGSLSLGGALGTLAVL), 286 to 306 (ILLVIVGGVFVVEALSVIFQV), and 335 to 355 (KIIVRFWIITIILALVAISTL).

This sequence belongs to the glycosyltransferase 4 family. MraY subfamily. Requires Mg(2+) as cofactor.

The protein resides in the cell inner membrane. The catalysed reaction is UDP-N-acetyl-alpha-D-muramoyl-L-alanyl-gamma-D-glutamyl-meso-2,6-diaminopimeloyl-D-alanyl-D-alanine + di-trans,octa-cis-undecaprenyl phosphate = di-trans,octa-cis-undecaprenyl diphospho-N-acetyl-alpha-D-muramoyl-L-alanyl-D-glutamyl-meso-2,6-diaminopimeloyl-D-alanyl-D-alanine + UMP. Its pathway is cell wall biogenesis; peptidoglycan biosynthesis. In terms of biological role, catalyzes the initial step of the lipid cycle reactions in the biosynthesis of the cell wall peptidoglycan: transfers peptidoglycan precursor phospho-MurNAc-pentapeptide from UDP-MurNAc-pentapeptide onto the lipid carrier undecaprenyl phosphate, yielding undecaprenyl-pyrophosphoryl-MurNAc-pentapeptide, known as lipid I. The protein is Phospho-N-acetylmuramoyl-pentapeptide-transferase of Citrifermentans bemidjiense (strain ATCC BAA-1014 / DSM 16622 / JCM 12645 / Bem) (Geobacter bemidjiensis).